The following is a 151-amino-acid chain: UPF0208 membrane protein KPN78578_26420 (151 aa).

2 consecutive transmembrane segments (helical) span residues 46–65 (YAIR…QIAL) and 69–91 (LGPA…WWLG).

The protein belongs to the UPF0208 family.

Its subcellular location is the cell inner membrane. This Klebsiella pneumoniae subsp. pneumoniae (strain ATCC 700721 / MGH 78578) protein is UPF0208 membrane protein KPN78578_26420.